Reading from the N-terminus, the 178-residue chain is Large ribosomal subunit protein eL20 (178 aa).

Belongs to the eukaryotic ribosomal protein eL20 family.

This chain is Large ribosomal subunit protein eL20 (RPL18A), found in Oryza sativa subsp. japonica (Rice).